The primary structure comprises 434 residues: Quinolone resistance transporter (434 aa).

12 helical membrane passes run 15–35 (LIPA…AVGF), 45–65 (GIGD…YFLF), 85–105 (ILLT…PKSF), 110–130 (FLLG…ITQW), 142–162 (MFVL…GLLL), 175–195 (WLFV…FLWL), 241–261 (VLLL…LNLW), 275–295 (IQIG…LLII), 306–326 (YGHL…SGWL), 333–353 (LAAL…FWTL), 367–387 (IALI…GIGL), and 396–416 (AAGL…TYIV).

This sequence belongs to the major facilitator superfamily.

Its subcellular location is the cell inner membrane. In terms of biological role, efflux pump that mediates resistance to quinolone-type antibiotics. The chain is Quinolone resistance transporter from Acinetobacter baumannii.